The primary structure comprises 89 residues: Small ribosomal subunit protein uS19 (89 aa).

This sequence belongs to the universal ribosomal protein uS19 family.

Its function is as follows. Protein S19 forms a complex with S13 that binds strongly to the 16S ribosomal RNA. This chain is Small ribosomal subunit protein uS19, found in Xanthomonas campestris pv. campestris (strain 8004).